We begin with the raw amino-acid sequence, 321 residues long: Sialic acid-binding periplasmic protein SiaP (321 aa).

Residues 1 to 22 (MKTINKITIAILTLSAAASVNA) form the signal peptide.

It belongs to the bacterial solute-binding protein 7 family. As to quaternary structure, the complex comprises the extracytoplasmic solute receptor protein SiaP, and the two transmembrane proteins SiaQ and SiaM.

It is found in the periplasm. Functionally, part of the tripartite ATP-independent periplasmic (TRAP) transport system SiaPQM that catalyzes unidirectional Na(+)-dependent sialic acid uptake. Binds the common sialic acid N-acetylneuraminic acid (Neu5Ac) with a high affinity. This Vibrio cholerae serotype O1 (strain ATCC 39315 / El Tor Inaba N16961) protein is Sialic acid-binding periplasmic protein SiaP.